We begin with the raw amino-acid sequence, 95 residues long: Pancreatic polypeptide prohormone (95 aa).

A signal peptide spans 1–29 (MAAARLCLSLLLLSTCVALLLQPLLGAQG). Tyr65 is subject to Tyrosine amide. Residues 89–95 (ELSPLDL) constitute a propeptide that is removed on maturation.

Belongs to the NPY family.

It is found in the secreted. Functionally, hormone secreted by pancreatic cells that acts as a regulator of pancreatic and gastrointestinal functions probably by signaling through the G protein-coupled receptor NPY4R2. This chain is Pancreatic polypeptide prohormone, found in Homo sapiens (Human).